We begin with the raw amino-acid sequence, 251 residues long: MNILLTNDDGIQAVGLRALYHGLKRAGMNVQVVAPVAEQSAVGHAVSLSSPLRVKKFEEDGFTGLGVYGTPVDCVKLGLTTLLETKPDIVVSGINSGANVGVDILYSGTVSAATEGALMGYPAMAVSYDSFKPEELTDQGDYCAELLKKIPWDSLGDKTVVNLNFPAVPVKDAEELKICRHTRVSWQDWYEAREDPRGHKYYWLNGVMPKEKISPGTDRDLLTKGHITMTPLHFDFTDREAIATLEQSFGI.

A divalent metal cation is bound by residues Asp8, Asp9, Ser40, and Asn95.

It belongs to the SurE nucleotidase family. A divalent metal cation is required as a cofactor.

The protein localises to the cytoplasm. It catalyses the reaction a ribonucleoside 5'-phosphate + H2O = a ribonucleoside + phosphate. Functionally, nucleotidase that shows phosphatase activity on nucleoside 5'-monophosphates. The chain is 5'-nucleotidase SurE from Maridesulfovibrio salexigens (strain ATCC 14822 / DSM 2638 / NCIMB 8403 / VKM B-1763) (Desulfovibrio salexigens).